Reading from the N-terminus, the 220-residue chain is Riboflavin kinase (220 aa).

The interval 1-92 is H-T-H motif-like; that stretch reads MDTSDQYYRA…LSRILSIKSN (92 aa). The tract at residues 93–220 is riboflavin kinase; the sequence is IVMTGIVVPG…GDEVTIEVTA (128 aa). 102-107 lines the CDP pocket; the sequence is GMGEGK. The Mg(2+) site is built by threonine 131 and asparagine 133. The FMN site is built by threonine 188 and glutamate 195. Residue 200–203 participates in CDP binding; that stretch reads KYLR.

It belongs to the archaeal riboflavin kinase family. Mg(2+) is required as a cofactor.

The catalysed reaction is riboflavin + CTP = CDP + FMN + H(+). It participates in cofactor biosynthesis; FMN biosynthesis; FMN from riboflavin (CTP route): step 1/1. In terms of biological role, catalyzes the CTP-dependent phosphorylation of riboflavin (vitamin B2) to form flavin mononucleotide (FMN). The protein is Riboflavin kinase (ribK) of Thermoplasma volcanium (strain ATCC 51530 / DSM 4299 / JCM 9571 / NBRC 15438 / GSS1).